We begin with the raw amino-acid sequence, 984 residues long: Ephrin type-B receptor 1 (984 aa).

The signal sequence occupies residues 1–17 (MALDCLLLFLLASAVAA). The Extracellular segment spans residues 18–540 (MEETLMDTRT…YKSELREQLP (523 aa)). The region spanning 19 to 201 (EETLMDTRTA…FFKKCPSIVQ (183 aa)) is the Eph LBD domain. 2 consecutive Fibronectin type-III domains span residues 322 to 432 (VPSG…TNQA) and 433 to 528 (APST…TLTD). N-linked (GlcNAc...) asparagine glycans are attached at residues Asn-334, Asn-426, and Asn-480. The chain crosses the membrane as a helical span at residues 541 to 563 (LIAGSAAAGVVFVVSLVAISIVC). Over 564–984 (SRKRAYSKEA…QMNQSPSVMA (421 aa)) the chain is Cytoplasmic. Tyr-600 carries the post-translational modification Phosphotyrosine. Residues 619–882 (VKIEEVIGAG…EIVNTLDKMI (264 aa)) form the Protein kinase domain. ATP is bound by residues 625 to 633 (IGAGEFGEV) and Lys-651. Asp-744 functions as the Proton acceptor in the catalytic mechanism. One can recognise an SAM domain in the interval 911 to 975 (TAFTTVDDWL…LSSIHSMRVQ (65 aa)). Tyr-928 bears the Phosphotyrosine; by autocatalysis mark. The PDZ-binding signature appears at 982–984 (VMA).

Belongs to the protein kinase superfamily. Tyr protein kinase family. Ephrin receptor subfamily. As to quaternary structure, heterotetramer upon binding of the ligand. The heterotetramer is composed of an ephrin dimer and a receptor dimer. Oligomerization is probably required to induce biological responses. Interacts with EPHB6; transphosphorylates EPHB6 to form an active signaling complex. Interacts with PICK1. Interacts (through Tyr-594) with NCK1 (via SH2 domain); activates the JUN cascade to regulate cell adhesion. The ligand-activated form interacts (through Tyr-928) with GRB7 and GRB10 (via SH2 domains). The ligand-activated form interacts (residues within the catalytic domain) with GRB2 (via SH2 domain). Interacts with GRB2, SHC1 and SRC; activates the MAPK/ERK cascade to regulate cell migration. Interacts with CBL; regulates receptor degradation through ubiquitination. Interacts with ACP1. In terms of processing, phosphorylated. Autophosphorylation is stimulated by the ligand EFNB1. Required for interaction with SH2 domain-containing interactors, for activation of the MAPK/ERK and JUN signaling cascades and for ubiquitination by CBL. Post-translationally, ubiquitinated; (EFNB1)ligand-induced poly- and/or multi-ubiquitination by CBL is regulated by SRC and leads to lysosomal degradation. Restricted to brain and testes.

It localises to the cell membrane. It is found in the early endosome membrane. Its subcellular location is the cell projection. The protein localises to the dendrite. It catalyses the reaction L-tyrosyl-[protein] + ATP = O-phospho-L-tyrosyl-[protein] + ADP + H(+). Receptor tyrosine kinase which binds promiscuously transmembrane ephrin-B family ligands residing on adjacent cells, leading to contact-dependent bidirectional signaling into neighboring cells. The signaling pathway downstream of the receptor is referred to as forward signaling while the signaling pathway downstream of the ephrin ligand is referred to as reverse signaling. Cognate/functional ephrin ligands for this receptor include EFNB1, EFNB2 and EFNB3. During nervous system development, regulates retinal axon guidance redirecting ipsilaterally ventrotemporal retinal ganglion cells axons at the optic chiasm midline. This probably requires repulsive interaction with EFNB2. In the adult nervous system together with EFNB3, regulates chemotaxis, proliferation and polarity of the hippocampus neural progenitors. In addition to its role in axon guidance also plays an important redundant role with other ephrin-B receptors in development and maturation of dendritic spines and synapse formation. May also regulate angiogenesis. More generally, may play a role in targeted cell migration and adhesion. Upon activation by EFNB1 and probably other ephrin-B ligands activates the MAPK/ERK and the JNK signaling cascades to regulate cell migration and adhesion respectively. Involved in the maintenance of the pool of satellite cells (muscle stem cells) by promoting their self-renewal and reducing their activation and differentiation. This chain is Ephrin type-B receptor 1 (Ephb1), found in Rattus norvegicus (Rat).